The sequence spans 37 residues: Large ribosomal subunit protein bL36 (37 aa).

Belongs to the bacterial ribosomal protein bL36 family.

The chain is Large ribosomal subunit protein bL36 from Helicobacter pylori (strain ATCC 700392 / 26695) (Campylobacter pylori).